The chain runs to 547 residues: Trigger factor-like protein TIG, Chloroplastic (547 aa).

Residues 1–77 (MELCVISTTT…SHGGNFRLFA (77 aa)) constitute a chloroplast transit peptide. Position 78 is an N-acetylalanine (alanine 78). The region spanning 271–366 (GDLAVVDISA…LFYRDLPTLD (96 aa)) is the PPIase FKBP-type domain.

The protein belongs to the FKBP-type PPIase family. Tig subfamily.

The protein localises to the plastid. It is found in the chloroplast. It carries out the reaction [protein]-peptidylproline (omega=180) = [protein]-peptidylproline (omega=0). Involved in protein export. Acts as a chaperone by maintaining the newly synthesized protein in an open conformation. Functions as a peptidyl-prolyl cis-trans isomerase. This chain is Trigger factor-like protein TIG, Chloroplastic (TIG), found in Arabidopsis thaliana (Mouse-ear cress).